Here is a 237-residue protein sequence, read N- to C-terminus: Large ribosomal subunit protein uL1 (237 aa).

This sequence belongs to the universal ribosomal protein uL1 family. As to quaternary structure, part of the 50S ribosomal subunit.

Binds directly to 23S rRNA. The L1 stalk is quite mobile in the ribosome, and is involved in E site tRNA release. In terms of biological role, protein L1 is also a translational repressor protein, it controls the translation of the L11 operon by binding to its mRNA. The protein is Large ribosomal subunit protein uL1 of Chloroflexus aggregans (strain MD-66 / DSM 9485).